Here is a 2514-residue protein sequence, read N- to C-terminus: Highly reducing polyketide synthase sphB (2514 aa).

In terms of domain architecture, Ketosynthase family 3 (KS3) spans 66 to 486; the sequence is QVPIAICGMA…GANAHVILES (421 aa). Catalysis depends on for beta-ketoacyl synthase activity residues C238, H374, and H409. Residues 580-904 form the Malonyl-CoA:ACP transacylase (MAT) domain; sequence MVFTGQGAQW…AIGALHSLNV (325 aa). Positions 950–1079 are N-terminal hotdog fold; it reads HDLLGARVAE…GEVCAQSSAP (130 aa). Positions 950–1240 constitute a PKS/mFAS DH domain; it reads HDLLGARVAE…AADISDTHAA (291 aa). The active-site Proton acceptor; for dehydratase activity is H982. A C-terminal hotdog fold region spans residues 1089-1240; it reads PRTLNVRKWY…AADISDTHAA (152 aa). D1150 serves as the catalytic Proton donor; for dehydratase activity. Residues 1319–1578 are methyltransferase (CMet) domain; the sequence is WTGLDHEAIS…EPHQVTTTMV (260 aa). The Enoyl reductase (ER) domain maps to 1779 to 2092; sequence GRVNSLHYAR…KGQHIGRVGV (314 aa). Positions 2120–2297 constitute a Ketoreductase (KR) domain; sequence ASYLMVGGLG…ASVVDMGAVE (178 aa). The Carrier domain occupies 2427–2504; the sequence is EAAKLFAVEI…ILGQYAANEV (78 aa). Position 2464 is an O-(pantetheine 4'-phosphoryl)serine (S2464).

The cofactor is pantetheine 4'-phosphate.

The catalysed reaction is holo-[ACP] + 8 malonyl-CoA + acetyl-CoA + 5 AH2 + 8 NADPH + 16 H(+) = (3R)-hydroxyoctadeca-4,10-dienoyl-[ACP] + 5 A + 8 CO2 + 8 NADP(+) + 9 CoA + 7 H2O. The protein operates within secondary metabolite biosynthesis. Functionally, highly reducing polyketide synthase; part of the gene cluster that mediates the biosynthesis of sphingofungins, bioactive molecules acting as sphingolipid inhibitors via inhibiting serine palmitoyl transferase (SPT). Within the pathway, sphB catalyzes the first step of sphingofungin biosynthesis by condensing 8 units of malonyl-CoA with one starter unit of acetyl-CoA, leading to an C18 polyketide precursor 3-hydroxyoctadeca-4,10-dienoyl-ACP containing one delta-6 desaturation and one delta-12 desaturation. The PKS sphB does not contain any putative thioesterase domain for releasing the nascent polyketide chain and it has been suggested that aminoacyl transferases can facilitate the polyketide chain release. The aminoacyl transferase sphA uses the sphB product to produce 3-keto-presphingofungin by adding an aminomalonate molecule. SphF then reduces the C-3 ketone of 3-keto-presphingofungin which leads to presphingofungin. The cytochrome P450 monooxygenase sphH converts presphingofungin into sphingofungin B1 which is further converted to sphingofungin B by the dioxygenase sphC. SphC is also able to convert presphingofungin into sphingofungin B2. The acetyltransferase sphE acetylates sphingofungin B to produce sphingofungin C, but can also convert sphingofungin B1 into sphingofungin C1 and sphingofungin B2 into sphingofungin C2. Finally, sphingofungin C can be spontaneously converted into sphingofungin D. This is Highly reducing polyketide synthase sphB from Aspergillus fumigatus (strain CBS 144.89 / FGSC A1163 / CEA10) (Neosartorya fumigata).